The sequence spans 307 residues: UDP-3-O-acyl-N-acetylglucosamine deacetylase (307 aa).

3 residues coordinate Zn(2+): histidine 78, histidine 241, and aspartate 245. Catalysis depends on histidine 268, which acts as the Proton donor.

This sequence belongs to the LpxC family. It depends on Zn(2+) as a cofactor.

It carries out the reaction a UDP-3-O-[(3R)-3-hydroxyacyl]-N-acetyl-alpha-D-glucosamine + H2O = a UDP-3-O-[(3R)-3-hydroxyacyl]-alpha-D-glucosamine + acetate. It participates in glycolipid biosynthesis; lipid IV(A) biosynthesis; lipid IV(A) from (3R)-3-hydroxytetradecanoyl-[acyl-carrier-protein] and UDP-N-acetyl-alpha-D-glucosamine: step 2/6. In terms of biological role, catalyzes the hydrolysis of UDP-3-O-myristoyl-N-acetylglucosamine to form UDP-3-O-myristoylglucosamine and acetate, the committed step in lipid A biosynthesis. The polypeptide is UDP-3-O-acyl-N-acetylglucosamine deacetylase (Variovorax paradoxus (strain S110)).